The following is a 435-amino-acid chain: Phospholipase A1 EG1, chloroplastic/mitochondrial (435 aa).

A chloroplast and mitochondrion-targeting transit peptide spans 1-31; that stretch reads MTLPRQCAAACRTGGGGGGVVRCRAVAAAGG. The short motif at 264–268 is the GXSXG element; sequence GHSMG. The active-site Acyl-ester intermediate is the Ser-266. Residues Asp-324 and His-371 each act as charge relay system in the active site.

The protein belongs to the AB hydrolase superfamily. Lipase family.

The protein localises to the mitochondrion. It is found in the plastid. The protein resides in the chloroplast. It catalyses the reaction a 1,2-diacyl-sn-glycero-3-phosphocholine + H2O = a 2-acyl-sn-glycero-3-phosphocholine + a fatty acid + H(+). Its function is as follows. Phospholipase that releases free fatty acids from phospholipids. Catalyzes the initial step of jasmonate (JA) biosynthesis. Required for the biosynthesis of endogenous JA in seedling, inflorescence and spikelets. Not essential for JA biosynthesis after wounding. Mediates spikelet development and specification of empty-glume identity. Functions in a high temperature-dependent manner to maintain floral developmental robustness under heat stress conditions. Functions by safeguarding the expression of several floral identity genes, such as MADS1, MADS6 and G1. The polypeptide is Phospholipase A1 EG1, chloroplastic/mitochondrial (Oryza sativa subsp. indica (Rice)).